A 319-amino-acid polypeptide reads, in one-letter code: Formimidoylglutamase (319 aa).

Residues His131, Asp154, His156, Asp158, Cys248, and Asp250 each contribute to the Mn(2+) site.

Belongs to the arginase family. Mn(2+) serves as cofactor.

It carries out the reaction N-formimidoyl-L-glutamate + H2O = formamide + L-glutamate. The protein operates within amino-acid degradation; L-histidine degradation into L-glutamate; L-glutamate from N-formimidoyl-L-glutamate (hydrolase route): step 1/1. Catalyzes the conversion of N-formimidoyl-L-glutamate to L-glutamate and formamide. In Legionella pneumophila (strain Paris), this protein is Formimidoylglutamase.